A 188-amino-acid chain; its full sequence is Probable thymidylate kinase (188 aa).

Glycine 11–threonine 18 lines the ATP pocket.

The protein belongs to the thymidylate kinase family.

It catalyses the reaction dTMP + ATP = dTDP + ADP. This chain is Probable thymidylate kinase (tmk), found in Methanocaldococcus jannaschii (strain ATCC 43067 / DSM 2661 / JAL-1 / JCM 10045 / NBRC 100440) (Methanococcus jannaschii).